A 392-amino-acid chain; its full sequence is Immunoglobulin-binding protein EibA (392 aa).

Residues 1–27 form the signal peptide; it reads MSKKFTKAVLSAAMAGVLFGVSFDIMA. The surface exposed passenger domain stretch occupies residues 28-301; that stretch reads AEQSYSALNA…IAANTRTLQQ (274 aa). Topologically, residues 28 to 341 are extracellular; that stretch reads AEQSYSALNA…GLFQPYSVGK (314 aa). Residues 174–215 are a coiled coil; the sequence is ESANSTIVANELEAQKGKLDAQKGELEAQKKNLGELTTRTDK. The right-handed coiled-coil (RHcc) stretch occupies residues 187-230; it reads AQKGKLDAQKGELEAQKKNLGELTTRTDKIDAAAAATAAKVESR. The segment at 231-256 is saddle domain; that stretch reads TLVGVSSDGTLTRAEGAKNTISVNDG. Positions 257–322 are left-handed coiled-coil (LHcc); the sequence is LVALSGRTDR…INENHKEMKR (66 aa). The segment at 299–341 is outer membrane translocation of the passenger domain; sequence LQQHSARLDSQQRQINENHKEMKRAAAQSAALTGLFQPYSVGK. The next 4 membrane-spanning stretches (beta stranded) occupy residues 342-352, 355-366, 369-378, and 382-392; these read FNASAAVGGYS, QALAVGVGYRFN, TAAKAGVAFS, and ASWNVGVNFEF. The segment at 342 to 392 is translocator domain; it reads FNASAAVGGYSDEQALAVGVGYRFNEQTAAKAGVAFSDGDASWNVGVNFEF.

The protein belongs to the autotransporter-2 (AT-2) (TC 1.B.40) family. Eib subfamily. Homotrimer; can probably form mixed heterotrimers in vivo. Will form mixed heterotrimers with EibD; these are correctly located in the outer membrane and bind IgG Fc, although less well than homotrimers. Does not form trimers with distantly related YadA from Y.enterocolitica; coexpression was lethal and one of the genes is eliminated in vivo. If the full translocator domain (299-392) is exchanged with that of YadA ('368-455'), will form heterotrimers with YadA and vice-versa. In denaturing gels runs as 2 bands of about 121 and 131 kDa; extracting the sample with 88% phenol at 70 degrees Celsius reduces part of the signal to about 45 kDa. Binds the Fc portion of IgG; binds more than 1 Fc per subunit.

It is found in the cell surface. The protein localises to the cell outer membrane. In terms of biological role, binds (in a non-immune fashion) to the Fc portion of human IgG but not IgA; binding occurs on the cell surface. Confers the ability to survive exposure to human serum exposure. Binds to the Fc portion of human IgG and to whole mouse antibodies also via Fc, binds more than 1 Fc or IgG. This Escherichia coli protein is Immunoglobulin-binding protein EibA.